The primary structure comprises 238 residues: Ribonuclease 3 (238 aa).

One can recognise an RNase III domain in the interval 10-139; the sequence is FKQFQEQTGI…FIGALYLDQG (130 aa). Residue E52 participates in Mg(2+) binding. D56 is a catalytic residue. Residues D125 and E128 each contribute to the Mg(2+) site. The active site involves E128. Residues 165–234 form the DRBM domain; sequence DYKSQLQEFV…AQMALAKLKQ (70 aa).

Belongs to the ribonuclease III family. As to quaternary structure, homodimer. The cofactor is Mg(2+).

The protein resides in the cytoplasm. It carries out the reaction Endonucleolytic cleavage to 5'-phosphomonoester.. Functionally, digests double-stranded RNA. Involved in the processing of primary rRNA transcript to yield the immediate precursors to the large and small rRNAs (23S and 16S). Processes some mRNAs, and tRNAs when they are encoded in the rRNA operon. Processes pre-crRNA and tracrRNA of type II CRISPR loci if present in the organism. The polypeptide is Ribonuclease 3 (Anoxybacillus flavithermus (strain DSM 21510 / WK1)).